The primary structure comprises 312 residues: Protoheme IX farnesyltransferase (312 aa).

9 consecutive transmembrane segments (helical) span residues 29–49 (VMSL…GHMN), 50–70 (PVLA…SGAL), 90–110 (IPAG…LSAF), 117–137 (LMVN…YAVV), 150–170 (IVIG…AATG), 177–197 (VVLF…LSLF), 223–243 (ALFY…LGFA), 248–268 (GAIS…MWVA), and 292–312 (LFAV…FGGF).

The protein belongs to the UbiA prenyltransferase family. Protoheme IX farnesyltransferase subfamily.

The protein resides in the cell inner membrane. The catalysed reaction is heme b + (2E,6E)-farnesyl diphosphate + H2O = Fe(II)-heme o + diphosphate. The protein operates within porphyrin-containing compound metabolism; heme O biosynthesis; heme O from protoheme: step 1/1. In terms of biological role, converts heme B (protoheme IX) to heme O by substitution of the vinyl group on carbon 2 of heme B porphyrin ring with a hydroxyethyl farnesyl side group. This Brucella anthropi (strain ATCC 49188 / DSM 6882 / CCUG 24695 / JCM 21032 / LMG 3331 / NBRC 15819 / NCTC 12168 / Alc 37) (Ochrobactrum anthropi) protein is Protoheme IX farnesyltransferase.